The following is a 541-amino-acid chain: Nectin 1b (541 aa).

Positions 1–21 (MDKQESFFVGHKSHRCSQNRS) are cleaved as a signal peptide. Residues 22 to 396 (VSQIHQRTSR…PAELHSSGAA (375 aa)) are Extracellular-facing. Asparagine 51, asparagine 105, asparagine 180, asparagine 242, asparagine 326, asparagine 337, and asparagine 372 each carry an N-linked (GlcNAc...) asparagine glycan. The 106-residue stretch at 77–182 (GDTVELKCLF…GNRENMVNLT (106 aa)) folds into the Ig-like V-type domain. A disulfide bridge connects residues cysteine 84 and cysteine 165. 2 Ig-like C2-type domains span residues 187–282 (PVTK…VILN) and 287–374 (PEVK…VNVT). Intrachain disulfides connect cysteine 212–cysteine 266 and cysteine 309–cysteine 356. Residues 397-417 (IGGAVGGVALLVAAIALLVFF) traverse the membrane as a helical segment. The Cytoplasmic portion of the chain corresponds to 418 to 541 (LRRRQRTFKG…SVISKKEWYV (124 aa)). Residues 440–507 (YSKAGGMPAH…VDEGESRDYD (68 aa)) are disordered. Positions 479 to 493 (SGDRDFDGNSEDLKR) are enriched in basic and acidic residues.

Belongs to the nectin family. In terms of assembly, cis- and trans-homodimer. Can form trans-heterodimers. As to expression, expressed in the developing eye and nervous system.

The protein resides in the cell membrane. It is found in the cell junction. Its subcellular location is the adherens junction. Its function is as follows. Cell adhesion molecule that promotes cell-cell contacts and plays important roles in the development of the nervous system. Acts by forming homophilic or heterophilic trans-dimers. The protein is Nectin 1b of Danio rerio (Zebrafish).